The sequence spans 196 residues: dITP/XTP pyrophosphatase (196 aa).

7 to 12 (THNPGK) is a substrate binding site. Mg(2+)-binding residues include Asp40 and Asp69. The Proton acceptor role is filled by Asp69. Residues Ser70, 150–153 (FGYD), Lys173, and 178–179 (HR) each bind substrate.

It belongs to the HAM1 NTPase family. As to quaternary structure, homodimer. It depends on Mg(2+) as a cofactor.

The catalysed reaction is XTP + H2O = XMP + diphosphate + H(+). It catalyses the reaction dITP + H2O = dIMP + diphosphate + H(+). The enzyme catalyses ITP + H2O = IMP + diphosphate + H(+). Pyrophosphatase that catalyzes the hydrolysis of nucleoside triphosphates to their monophosphate derivatives, with a high preference for the non-canonical purine nucleotides XTP (xanthosine triphosphate), dITP (deoxyinosine triphosphate) and ITP. Seems to function as a house-cleaning enzyme that removes non-canonical purine nucleotides from the nucleotide pool, thus preventing their incorporation into DNA/RNA and avoiding chromosomal lesions. The polypeptide is dITP/XTP pyrophosphatase (Exiguobacterium sp. (strain ATCC BAA-1283 / AT1b)).